We begin with the raw amino-acid sequence, 244 residues long: 5-oxoprolinase subunit A (244 aa).

The protein belongs to the LamB/PxpA family. Forms a complex composed of PxpA, PxpB and PxpC.

The catalysed reaction is 5-oxo-L-proline + ATP + 2 H2O = L-glutamate + ADP + phosphate + H(+). Its function is as follows. Catalyzes the cleavage of 5-oxoproline to form L-glutamate coupled to the hydrolysis of ATP to ADP and inorganic phosphate. The chain is 5-oxoprolinase subunit A from Salmonella paratyphi C (strain RKS4594).